We begin with the raw amino-acid sequence, 586 residues long: MCGILAVLGCSDDSQAKRVRVLELSRRLRHRGPDWSGIYQNGFNYLAHQRLAIIDPDSGDQPLFNEDKSIVVTVNGEIYNHEELRKGLKNHKFHTGSDCDVIAHLYEEHGENFVDMLDGIFSFVLLDTRDNSFMVARDAVGVTSLYIGWGLDGSLWVSSEMKGLHEDCEHFEAFPPGHLYSSKSGGGFKQWYNPPWFNESVPSTPYEPLAIRSAFEDAVIKRLMTDVPFGVLLSGGLDSSLVASITARHLAGTKAAKRWGPQLHSFCVGLEGSPDLKAGKEVAEYLGTVHHEFHFTVQDGIDAIEDVIYHVETYDVTTIRASTPMFLMSRKIKSLGVKMVLSGEGSDEIFGGYLYFHKAPNKQEFHQETCRKIKALHKYDCLRANKATSAFGLEARVPFLDKEFINTAMSLDPESKMIKPEEGRIEKWVLRRAFDDEERPYLPKHILYRQKEQFSDGVGYSWIDGLKAHAAENVNDKMMSKAAFIFPHNTPLTKEAYYYRMIFERFFPQNSARLTVPGGATVACSTAKAVEWDASWSNNMDPSGRAAIGVHLSAYDGSKVALPLPAPHKAIDDIPMMMGQEVVIQT.

Cys-2 functions as the For GATase activity in the catalytic mechanism. Residues 2–185 (CGILAVLGCS…PGHLYSSKSG (184 aa)) enclose the Glutamine amidotransferase type-2 domain. L-glutamine contacts are provided by residues 50–54 (RLAII), 75–77 (NGE), and Asp-98. Positions 194–517 (PPWFNESVPS…PQNSARLTVP (324 aa)) constitute an Asparagine synthetase domain. ATP contacts are provided by residues Leu-232, Val-268, and 342–343 (SG).

This sequence belongs to the asparagine synthetase family.

It catalyses the reaction L-aspartate + L-glutamine + ATP + H2O = L-asparagine + L-glutamate + AMP + diphosphate + H(+). It participates in amino-acid biosynthesis; L-asparagine biosynthesis; L-asparagine from L-aspartate (L-Gln route): step 1/1. This chain is Asparagine synthetase [glutamine-hydrolyzing], found in Brassica oleracea (Wild cabbage).